The chain runs to 190 residues: Myosin, light chain 1, alkali; skeletal, fast (190 aa).

Residues Met1–Glu17 show a composition bias toward basic and acidic residues. The disordered stretch occupies residues Met1–Ala33. Pro residues predominate over residues Ala19–Pro28. 2 consecutive EF-hand domains span residues Asp46–Asn81 and Ala123–Lys158.

As to quaternary structure, myosin is a hexamer of 2 heavy chains and 4 light chains. Does not bind calcium. As to expression, expressed in fast muscle fibers during skeletal muscle differentiation.

In terms of biological role, non-regulatory myosin light chain required for proper formation and/or maintenance of myofibers, and thus appropriate muscle function. In Danio rerio (Zebrafish), this protein is Myosin, light chain 1, alkali; skeletal, fast.